The following is a 264-amino-acid chain: MKQYKDLCRHVLEHGEKKGDRTGTGTISTFGYQMRFHLQEGFPMLTTKKLHFKSIAHELLWFLKGDTNVRYLQENGVRIWNEWADENGELGPVYGSQWRSWRGADGETIDQISRLIEDIKTNPNSRRLIVSAWNVGEIDKMALPPCHCLFQFYVSDGKLSCQLYQRSADVFLGVPFNIASYALLTMMIAHVTGLEPGEFIHTFGDVHIYQNHIEQVNLQLTRDVRPLPKLRFAREIDSIFNFAFEDFIIEDYDPHPHIKGAVSV.

DUMP is bound at residue R21. Residue H51 participates in (6R)-5,10-methylene-5,6,7,8-tetrahydrofolate binding. 126 to 127 serves as a coordination point for dUMP; the sequence is RR. C146 serves as the catalytic Nucleophile. Residues 166-169, N177, and 207-209 contribute to the dUMP site; these read RSAD and HIY. D169 contributes to the (6R)-5,10-methylene-5,6,7,8-tetrahydrofolate binding site. A (6R)-5,10-methylene-5,6,7,8-tetrahydrofolate-binding site is contributed by S263.

Belongs to the thymidylate synthase family. Bacterial-type ThyA subfamily. In terms of assembly, homodimer.

It localises to the cytoplasm. It catalyses the reaction dUMP + (6R)-5,10-methylene-5,6,7,8-tetrahydrofolate = 7,8-dihydrofolate + dTMP. The protein operates within pyrimidine metabolism; dTTP biosynthesis. Functionally, catalyzes the reductive methylation of 2'-deoxyuridine-5'-monophosphate (dUMP) to 2'-deoxythymidine-5'-monophosphate (dTMP) while utilizing 5,10-methylenetetrahydrofolate (mTHF) as the methyl donor and reductant in the reaction, yielding dihydrofolate (DHF) as a by-product. This enzymatic reaction provides an intracellular de novo source of dTMP, an essential precursor for DNA biosynthesis. The sequence is that of Thymidylate synthase 2 from Bacillus spizizenii (strain ATCC 23059 / NRRL B-14472 / W23) (Bacillus subtilis subsp. spizizenii).